The primary structure comprises 857 residues: Protein sip-5 (857 aa).

6 disordered regions span residues 1–81 (MGNA…ARRL), 157–231 (GLPI…FKPT), 384–416 (SESS…APNV), 466–517 (FGRR…GNRR), 545–747 (KAEK…PMFN), and 763–857 (HAGK…QVTL). Basic and acidic residues-rich tracts occupy residues 7–16 (KESRGDDSGR) and 36–48 (ESSR…RHDL). The span at 49-61 (TGLLGRAAGGSSS) shows a compositional bias: low complexity. The span at 62–81 (HADERHERKETKQEREARRL) shows a compositional bias: basic and acidic residues. Composition is skewed to polar residues over residues 179-191 (ASPT…TNHL) and 199-208 (SLSTASEHST). Composition is skewed to low complexity over residues 209-230 (SNAG…PFKP), 384-394 (SESSVNSGSLS), and 476-504 (SASA…TANT). The segment covering 545–572 (KAEKEEQKEAKKREKEREKAEKKAEKAA) has biased composition (basic and acidic residues). 2 stretches are compositionally biased toward low complexity: residues 586 to 604 (SRSG…PGLS) and 621 to 645 (ASVA…ALAP). The segment covering 648 to 657 (STKDKGKAVD) has biased composition (basic and acidic residues). Residues 688 to 697 (SSASSASSSA) are compositionally biased toward low complexity. Residues 698 to 712 (VESNQGSYVPPSNLQ) show a composition bias toward polar residues. Over residues 783–799 (ETAKSGEGAGEHVEHVL) the composition is skewed to basic and acidic residues. Composition is skewed to polar residues over residues 800–838 (DSQT…STAS) and 845–857 (NETT…QVTL).

This sequence belongs to the SIP5 family.

Its subcellular location is the cytoplasm. Its function is as follows. May negatively regulate the snf-1 kinase. The protein is Protein sip-5 (sip-5) of Neurospora crassa (strain ATCC 24698 / 74-OR23-1A / CBS 708.71 / DSM 1257 / FGSC 987).